Consider the following 248-residue polypeptide: Ribonuclease 3 (248 aa).

Positions 16-145 constitute an RNase III domain; that stretch reads TEGLETSIGY…LLAAMYLDGG (130 aa). Glu-58 serves as a coordination point for Mg(2+). Asp-62 is a catalytic residue. Asn-131 and Glu-134 together coordinate Mg(2+). Glu-134 is an active-site residue. Residues 172–241 enclose the DRBM domain; the sequence is DFKTDFQELA…ARQCLERLET (70 aa).

Belongs to the ribonuclease III family. In terms of assembly, homodimer. It depends on Mg(2+) as a cofactor.

Its subcellular location is the cytoplasm. It catalyses the reaction Endonucleolytic cleavage to 5'-phosphomonoester.. In terms of biological role, digests double-stranded RNA. Involved in the processing of primary rRNA transcript to yield the immediate precursors to the large and small rRNAs (23S and 16S). Processes some mRNAs, and tRNAs when they are encoded in the rRNA operon. Processes pre-crRNA and tracrRNA of type II CRISPR loci if present in the organism. The chain is Ribonuclease 3 from Geobacter sulfurreducens (strain ATCC 51573 / DSM 12127 / PCA).